The primary structure comprises 732 residues: Polyribonucleotide nucleotidyltransferase (732 aa).

Positions 503 and 509 each coordinate Mg(2+). The 60-residue stretch at 570 to 629 folds into the KH domain; sequence PRLTSIQIPVDAIGLIIGKGGETIRSITEETGAEINIEDDGTVTIACSSPEGTNAAVETI. Residues 639-713 enclose the S1 motif domain; the sequence is GNTYLGKVRD…GKNRFALSIK (75 aa). The tract at residues 710–732 is disordered; that stretch reads LSIKAVESEPEKSDENKAGTEGN. Over residues 715–732 the composition is skewed to basic and acidic residues; sequence VESEPEKSDENKAGTEGN.

The protein belongs to the polyribonucleotide nucleotidyltransferase family. It depends on Mg(2+) as a cofactor.

It is found in the cytoplasm. The enzyme catalyses RNA(n+1) + phosphate = RNA(n) + a ribonucleoside 5'-diphosphate. Functionally, involved in mRNA degradation. Catalyzes the phosphorolysis of single-stranded polyribonucleotides processively in the 3'- to 5'-direction. The chain is Polyribonucleotide nucleotidyltransferase from Chlorobium phaeobacteroides (strain DSM 266 / SMG 266 / 2430).